Consider the following 505-residue polypeptide: Maturase K (505 aa).

It belongs to the intron maturase 2 family. MatK subfamily.

The protein localises to the plastid. It is found in the chloroplast. In terms of biological role, usually encoded in the trnK tRNA gene intron. Probably assists in splicing its own and other chloroplast group II introns. In Ulmus parvifolia (Chinese elm), this protein is Maturase K.